The following is a 307-amino-acid chain: tRNA dimethylallyltransferase (307 aa).

11–18 (GPTGSGKT) lines the ATP pocket. 13-18 (TGSGKT) contacts substrate. The tract at residues 36 to 39 (DSVA) is interaction with substrate tRNA.

This sequence belongs to the IPP transferase family. As to quaternary structure, monomer. It depends on Mg(2+) as a cofactor.

It carries out the reaction adenosine(37) in tRNA + dimethylallyl diphosphate = N(6)-dimethylallyladenosine(37) in tRNA + diphosphate. Catalyzes the transfer of a dimethylallyl group onto the adenine at position 37 in tRNAs that read codons beginning with uridine, leading to the formation of N6-(dimethylallyl)adenosine (i(6)A). The protein is tRNA dimethylallyltransferase of Koribacter versatilis (strain Ellin345).